We begin with the raw amino-acid sequence, 447 residues long: Probable asparagine--tRNA ligase, cytoplasmic (447 aa).

The protein belongs to the class-II aminoacyl-tRNA synthetase family.

It is found in the cytoplasm. The enzyme catalyses tRNA(Asn) + L-asparagine + ATP = L-asparaginyl-tRNA(Asn) + AMP + diphosphate + H(+). This Vairimorpha ceranae (strain BRL01) (Microsporidian parasite) protein is Probable asparagine--tRNA ligase, cytoplasmic.